The primary structure comprises 400 residues: Tryptophan--tRNA ligase, cytoplasmic (400 aa).

The 'HIGH' region motif lies at 95-104; it reads PSSGSLHFGH. The short motif at 281 to 285 is the 'KMSKS' region element; the sequence is KMSAS.

The protein belongs to the class-I aminoacyl-tRNA synthetase family.

Its subcellular location is the cytoplasm. The enzyme catalyses tRNA(Trp) + L-tryptophan + ATP = L-tryptophyl-tRNA(Trp) + AMP + diphosphate + H(+). This chain is Tryptophan--tRNA ligase, cytoplasmic (trpS), found in Dictyostelium discoideum (Social amoeba).